The following is an 88-amino-acid chain: Large ribosomal subunit protein bL27 (88 aa).

It belongs to the bacterial ribosomal protein bL27 family.

The polypeptide is Large ribosomal subunit protein bL27 (Parabacteroides distasonis (strain ATCC 8503 / DSM 20701 / CIP 104284 / JCM 5825 / NCTC 11152)).